Consider the following 632-residue polypeptide: tRNA uridine 5-carboxymethylaminomethyl modification enzyme MnmG (632 aa).

14–19 is a binding site for FAD; the sequence is GAGHAG. 273-287 provides a ligand contact to NAD(+); that stretch reads GPRYCPSFEDKIMRF.

The protein belongs to the MnmG family. Homodimer. Heterotetramer of two MnmE and two MnmG subunits. The cofactor is FAD.

The protein localises to the cytoplasm. Its function is as follows. NAD-binding protein involved in the addition of a carboxymethylaminomethyl (cmnm) group at the wobble position (U34) of certain tRNAs, forming tRNA-cmnm(5)s(2)U34. The polypeptide is tRNA uridine 5-carboxymethylaminomethyl modification enzyme MnmG (Clostridium novyi (strain NT)).